A 159-amino-acid chain; its full sequence is Ribosomal RNA large subunit methyltransferase H (159 aa).

S-adenosyl-L-methionine is bound by residues leucine 76, glycine 108, and 127–132 (FSKMTF).

This sequence belongs to the RNA methyltransferase RlmH family. Homodimer.

It is found in the cytoplasm. The enzyme catalyses pseudouridine(1915) in 23S rRNA + S-adenosyl-L-methionine = N(3)-methylpseudouridine(1915) in 23S rRNA + S-adenosyl-L-homocysteine + H(+). Functionally, specifically methylates the pseudouridine at position 1915 (m3Psi1915) in 23S rRNA. In Staphylococcus aureus (strain Mu3 / ATCC 700698), this protein is Ribosomal RNA large subunit methyltransferase H.